The chain runs to 102 residues: Small ribosomal subunit protein uS10 (102 aa).

Belongs to the universal ribosomal protein uS10 family. In terms of assembly, part of the 30S ribosomal subunit.

Involved in the binding of tRNA to the ribosomes. The chain is Small ribosomal subunit protein uS10 from Enterococcus faecalis (strain ATCC 700802 / V583).